The chain runs to 296 residues: 4-hydroxy-tetrahydrodipicolinate synthase (296 aa).

Thr-49 serves as a coordination point for pyruvate. Tyr-137 functions as the Proton donor/acceptor in the catalytic mechanism. Catalysis depends on Lys-166, which acts as the Schiff-base intermediate with substrate. Residue Ile-208 coordinates pyruvate.

The protein belongs to the DapA family. As to quaternary structure, homotetramer; dimer of dimers.

It is found in the cytoplasm. It catalyses the reaction L-aspartate 4-semialdehyde + pyruvate = (2S,4S)-4-hydroxy-2,3,4,5-tetrahydrodipicolinate + H2O + H(+). It participates in amino-acid biosynthesis; L-lysine biosynthesis via DAP pathway; (S)-tetrahydrodipicolinate from L-aspartate: step 3/4. Its function is as follows. Catalyzes the condensation of (S)-aspartate-beta-semialdehyde [(S)-ASA] and pyruvate to 4-hydroxy-tetrahydrodipicolinate (HTPA). The sequence is that of 4-hydroxy-tetrahydrodipicolinate synthase from Pelodictyon phaeoclathratiforme (strain DSM 5477 / BU-1).